Consider the following 1131-residue polypeptide: Topless-related protein 2 (1131 aa).

In terms of domain architecture, LisH spans 4–36 (LSRELVFLILQFLDEEKFKESVHKLEQESGFFF). Residues 34 to 92 (FFFNIKYFEEKALAGEWDEVEKYLSGFTKVDDNRYSMKIFFEIRKQKYLEALDRNDRAK) enclose the CTLH domain. Position 214 is a phosphothreonine (threonine 214). WD repeat units follow at residues 345 to 385 (RQGS…KVVT), 407 to 446 (EPSI…LRQH), 451 to 493 (AHVG…FTFE), 495 to 535 (HEAP…SRVD), 585 to 624 (FRKK…LLTV), 629 to 668 (GGLP…RTLR), 763 to 802 (DSVS…QNPT), 829 to 867 (NPEG…VMTT), 870 to 910 (PPPP…VKTK), 913 to 952 (GHQK…KKKS), 959 to 999 (PGKA…CIHK), and 1005 to 1044 (ALSS…LRCR). The interval 1099-1131 (VGVAAGSDKAGTENGRPSSSSAANNSSSDQIQR) is disordered. Low complexity predominate over residues 1116–1131 (SSSSAANNSSSDQIQR).

In terms of assembly, tetramer. Interacts with NINJA/AFPH2. Interacts with SMXL6, SMXL7 and SMXL8. Interacts with SPL (via EAR motif). Interacts with SPEAR3/TIE1.

Its subcellular location is the nucleus. Functionally, transcriptional corepressor. Negative regulator of jasmonate responses. The chain is Topless-related protein 2 (TPR2) from Arabidopsis thaliana (Mouse-ear cress).